The chain runs to 323 residues: uncharacterized protein (323 aa).

A helical transmembrane segment spans residues 4–24 (IIFAFIILFVFLLPMIIFYQP).

The protein localises to the membrane. This is an uncharacterized protein from Escherichia coli (strain K12).